Here is a 296-residue protein sequence, read N- to C-terminus: Probable endonuclease 4 (296 aa).

Residues His-68, His-109, Glu-144, Asp-178, His-181, His-213, Asp-226, His-228, and Glu-258 each coordinate Zn(2+).

Belongs to the AP endonuclease 2 family. Zn(2+) serves as cofactor.

It catalyses the reaction Endonucleolytic cleavage to 5'-phosphooligonucleotide end-products.. Functionally, endonuclease IV plays a role in DNA repair. It cleaves phosphodiester bonds at apurinic or apyrimidinic (AP) sites, generating a 3'-hydroxyl group and a 5'-terminal sugar phosphate. The polypeptide is Probable endonuclease 4 (Staphylococcus carnosus (strain TM300)).